The sequence spans 130 residues: Small ribosomal subunit protein uS8 (130 aa).

It belongs to the universal ribosomal protein uS8 family. Part of the 30S ribosomal subunit. Contacts proteins S5 and S12.

One of the primary rRNA binding proteins, it binds directly to 16S rRNA central domain where it helps coordinate assembly of the platform of the 30S subunit. This chain is Small ribosomal subunit protein uS8, found in Coxiella burnetii (strain Dugway 5J108-111).